The chain runs to 693 residues: Elongation factor G 1 (693 aa).

Residues 4-281 (NKLRNIGISA…AVTRFLPSPH (278 aa)) enclose the tr-type G domain. GTP is bound by residues 13–20 (AHIDSGKT), 80–84 (DTPGH), and 134–137 (NKCD).

It belongs to the TRAFAC class translation factor GTPase superfamily. Classic translation factor GTPase family. EF-G/EF-2 subfamily.

Its subcellular location is the cytoplasm. In terms of biological role, catalyzes the GTP-dependent ribosomal translocation step during translation elongation. During this step, the ribosome changes from the pre-translocational (PRE) to the post-translocational (POST) state as the newly formed A-site-bound peptidyl-tRNA and P-site-bound deacylated tRNA move to the P and E sites, respectively. Catalyzes the coordinated movement of the two tRNA molecules, the mRNA and conformational changes in the ribosome. This chain is Elongation factor G 1, found in Borreliella afzelii (strain PKo) (Borrelia afzelii).